An 809-amino-acid polypeptide reads, in one-letter code: MNIKKEFIKVISMSCLVTAITLSGPVFIPLVQGAGGHGDVGMHVKEKEKNKDENKRKDEERNKTQEEHLKEIMKHIVKIEVKGEEAVKKEAAEKLLEKVPSDVLEMYKAIGGKIYIVDGDITKHISLEALSEDKKKIKDIYGKDALLHEHYVYAKEGYEPVLVIQSSEDYVENTEKALNVYYEIGKILSRDILSKINQPYQKFLDVLNTIKNASDSDGQDLLFTNQLKEHPTDFSVEFLEQNSNEVQEVFAKAFAYYIEPQHRDVLQLYAPEAFNYMDKFNEQEINLSLEELKDQRMLARYEKWEKIKQHYQHWSDSLSEEGRGLLKKLQIPIEPKKDDIIHSLSQEEKELLKRIQIDSSDFLSTEEKEFLKKLQIDIRDSLSEEEKELLNRIQVDSSNPLSEKEKEFLKKLKLDIQPYDINQRLQDTGGLIDSPSINLDVRKQYKRDIQNIDALLHQSIGSTLYNKIYLYENMNINNLTATLGADLVDSTDNTKINRGIFNEFKKNFKYSISSNYMIVDINERPALDNERLKWRIQLSPDTRAGYLENGKLILQRNIGLEIKDVQIIKQSEKEYIRIDAKVVPKSKIDTKIQEAQLNINQEWNKALGLPKYTKLITFNVHNRYASNIVESAYLILNEWKNNIQSDLIKKVTNYLVDGNGRFVFTDITLPNIAEQYTHQDEIYEQVHSKGLYVPESRSILLHGPSKGVELRNDSEGFIHEFGHAVDDYAGYLLDKNQSDLVTNSKKFIDIFKEEGSNLTSYGRTNEAEFFAEAFRLMHSTDHAERLKVQKNAPKTFQFINDQIKFIINS.

Residues 1-33 (MNIKKEFIKVISMSCLVTAITLSGPVFIPLVQG) form the signal peptide. The interval 39-66 (DVGMHVKEKEKNKDENKRKDEERNKTQE) is disordered. Positions 40–66 (VGMHVKEKEKNKDENKRKDEERNKTQE) are enriched in basic and acidic residues. An i; PA-binding region region spans residues 60–295 (ERNKTQEEHL…NLSLEELKDQ (236 aa)). The 213-residue stretch at 70–282 (KEIMKHIVKI…AFNYMDKFNE (213 aa)) folds into the ATLF-like 1 domain. Residues 296–330 (RMLARYEKWEKIKQHYQHWSDSLSEEGRGLLKKLQ) are IIA. Tandem repeats lie at residues 315–333 (SDSL…QIPI), 342–357 (HSLS…RIQI), 360–378 (SDFL…QIDI), 380–397 (DSLS…QVDS), and 399–416 (NPLS…KLDI). Positions 315 to 416 (SDSLSEEGRG…EFLKKLKLDI (102 aa)) are 5 X approximate repeats. The interval 336–416 (KKDDIIHSLS…EFLKKLKLDI (81 aa)) is III. An IIB region spans residues 420-583 (DINQRLQDTG…EYIRIDAKVV (164 aa)). Residues 585–809 (KSKIDTKIQE…NDQIKFIINS (225 aa)) form an IV region. In terms of domain architecture, ATLF-like 2 spans 609 to 804 (LPKYTKLITF…TFQFINDQIK (196 aa)). A Zn(2+)-binding site is contributed by histidine 719. Glutamate 720 (proton acceptor) is an active-site residue. Residues histidine 723, tyrosine 761, and glutamate 768 each coordinate Zn(2+).

This sequence belongs to the peptidase M34 family. In terms of assembly, interacts (via ATLF domain 1) with the cleaved form of protective antigen (PA-63) anthrax toxin; interaction is required for LF translocation into the host cytoplasm. Interacts with PA-63 homooligomers (either homoheptamers or homooctamers): three molecules of LF bind the PA-63 homoheptamer to form the PA(7)LF(3) complex, in which the relative position of the N-terminal alpha-helices in the three LFs determines which factor is translocated first. The cofactor is Zn(2+).

The protein resides in the secreted. It is found in the host cytoplasm. Its subcellular location is the host cytosol. It carries out the reaction Preferred amino acids around the cleavage site can be denoted BBBBxHx-|-H, in which B denotes Arg or Lys, H denotes a hydrophobic amino acid, and x is any amino acid. The only known protein substrates are mitogen-activated protein (MAP) kinase kinases.. Its activity is regulated as follows. Inhibited by NSC-12155 (1,3-Bis(2-methyl-4-aminoquinoline-6-yl)ure). Inhibited by phenoxyacetic acid bearing alpha-benzyl substituents on the C2-side chain. Inhibited by sulfonamide hydroxamate with benzylic additions at the sulfonamide nitrogen. Also inhibited by sulfonamide hydroxamates with alkylation at the sulfonamide nitrogen. Inhibited by hydroxamic acid inhibitors. Its function is as follows. Lethal factor (LF), which constitutes one of the three proteins composing the anthrax toxin, is able to trigger rapid cell death in macrophages. Acts as a protease that cleaves the N-terminal of most dual specificity mitogen-activated protein kinase kinases (MAPKKs or MAP2Ks) (except for MAP2K5): cleavage invariably occurs within the N-terminal proline-rich region preceding the kinase domain, thus disrupting a sequence involved in directing specific protein-protein interactions necessary for the assembly of signaling complexes. Also cleaves mouse Nlrp1b: host Nlrp1b cleavage promotes ubiquitination and degradation of the N-terminal part of Nlrp1b by the proteasome, thereby releasing the cleaved C-terminal part of Nlrp1b, which polymerizes and forms the Nlrp1b inflammasome followed by host cell pyroptosis. Able to cleave mouse Nlrp1b alleles 1 and 5, while it is not able to cleave Nlrp1b alleles 2, 3 and 4. In contrast, does not cleave NLRP1 human ortholog. LF is not toxic by itself and only acts as a lethal factor when associated with protective antigen (PA) to form the lethal toxin (LeTx): PA is required for LF translocation into the host cytosol. The chain is Lethal factor from Bacillus anthracis.